Consider the following 139-residue polypeptide: MAAPKKTQKRMPRRREEFTYRGYKIDELKAMGLSELIPLMPARARRKFNRGLNRGEETLLEKIRGGDEKIRTHLREMIVMPEMIGKSIEIYNGKEFLKVEFQPESVFHYLGEFALTRKRVTHGSAGIGATRGSKYVPLK.

The protein belongs to the universal ribosomal protein uS19 family.

Protein S19 forms a complex with S13 that binds strongly to the 16S ribosomal RNA. The polypeptide is Small ribosomal subunit protein uS19 (Methanoregula boonei (strain DSM 21154 / JCM 14090 / 6A8)).